A 1495-amino-acid chain; its full sequence is Collagen alpha-1(XVII) chain (1495 aa).

Positions 1-17 (MDSVTKKTRQDGSEVTE) are enriched in basic and acidic residues. The interval 1–138 (MDSVTKKTRQ…VRLQSASPSG (138 aa)) is disordered. The Cytoplasmic portion of the chain corresponds to 1–435 (MDSVTKKTRQ…CGSCCSWWKW (435 aa)). The tract at residues 1-535 (MDSVTKKTRQ…IERGYFRGER (535 aa)) is nonhelical region (NC16). Positions 19–32 (QGGSSSGLKTSSHT) are enriched in polar residues. Residues 51-63 (SSGSGRLNSSSSG) are compositionally biased toward low complexity. Polar residues-rich tracts occupy residues 64 to 80 (YRQT…SPGS) and 95 to 104 (EGSSSANSSP). A helical; Signal-anchor for type II membrane protein transmembrane segment spans residues 436–456 (LLGLLLAWLLLLGLLFGLIAL). Over 457–1495 (AEEVRKLKSR…GRRRRRSVGV (1039 aa)) the chain is Extracellular. Disordered stretches follow at residues 532 to 824 (RGER…EKGS), 847 to 999 (DLQG…SSSQ), 1160 to 1185 (EFSG…SSGI), 1201 to 1226 (SISG…TGLL), 1251 to 1278 (RSYI…LVAG), 1295 to 1336 (GGSI…GSYG), and 1396 to 1416 (MSYT…PGIS). Residues 536-1482 (GEPGMKGDMG…KGEKGEKGEQ (947 aa)) are triple-helical region. Composition is skewed to low complexity over residues 702–711 (PGAKGPAGQA) and 761–773 (RPGA…APGK). A compositionally biased stretch (pro residues) spans 786-807 (PGPPGPPGPIGPTGPPGVPGPV). The segment covering 809–818 (PAGLPGQQGP) has biased composition (low complexity). Composition is skewed to pro residues over residues 871 to 886 (PRGP…PPGR), 901 to 910 (PPGPPGPPGP), 946 to 955 (PPGPPGPPGP), 981 to 993 (PPGP…PPGP), 1167 to 1179 (PPGP…PPGI), 1208 to 1218 (PPGPPGPPGPP), and 1257 to 1269 (PPGP…PPGP). Residues 1296 to 1308 (GSIGAEGSHGGSL) show a composition bias toward gly residues. The span at 1309 to 1336 (GASSSYGSSMSSSMSSYSASMGSDGSYG) shows a compositional bias: low complexity. The span at 1403–1413 (PPGPPGPPGPP) shows a compositional bias: pro residues. N-linked (GlcNAc...) asparagine glycosylation occurs at N1424. The segment at 1435-1495 (THGTVRGPPG…GRRRRRSVGV (61 aa)) is disordered. Positions 1472–1481 (PKGEKGEKGE) are enriched in basic and acidic residues. Positions 1483–1495 (MYSGRRRRRSVGV) are nonhelical region (NC1). Positions 1486-1495 (GRRRRRSVGV) are enriched in basic residues.

Homotrimers of alpha 1(XVII)chains. The intracellular/endo domain is disulfide-linked. Post-translationally, prolines at the third position of the tripeptide repeating unit (G-X-Y) are hydroxylated in some or all of the chains. In terms of processing, the ectodomain is shedded from the surface of keratinocytes resulting in a 120-kDa soluble form, also named as 120 kDa linear IgA disease antigen homolog. The shedding is mediated by membrane-bound metalloproteases. Cornea specific.

It is found in the cell junction. The protein localises to the hemidesmosome. Its subcellular location is the membrane. It localises to the secreted. The protein resides in the extracellular space. It is found in the extracellular matrix. The protein localises to the basement membrane. Functionally, may play a role in the integrity of hemidesmosome and the attachment of basal keratinocytes to the underlying basement membrane. Its function is as follows. The 120 kDa linear IgA disease antigen homolog is an anchoring filament component involved in dermal-epidermal cohesion. In Gallus gallus (Chicken), this protein is Collagen alpha-1(XVII) chain (COL17A1).